The primary structure comprises 181 residues: Ribosome maturation factor RimM (181 aa).

The 80-residue stretch at 98–177 (EGEFFYCDLV…KITTHNAKTL (80 aa)) folds into the PRC barrel domain.

This sequence belongs to the RimM family. Binds ribosomal protein uS19.

The protein resides in the cytoplasm. Functionally, an accessory protein needed during the final step in the assembly of 30S ribosomal subunit, possibly for assembly of the head region. Essential for efficient processing of 16S rRNA. May be needed both before and after RbfA during the maturation of 16S rRNA. It has affinity for free ribosomal 30S subunits but not for 70S ribosomes. In Helicobacter pylori (strain HPAG1), this protein is Ribosome maturation factor RimM.